The primary structure comprises 403 residues: Coenzyme A biosynthesis bifunctional protein CoaBC (403 aa).

The phosphopantothenoylcysteine decarboxylase stretch occupies residues 1-197 (MLHHVKLIYA…LHPKSLEGKR (197 aa)). Residues 198-403 (VLVTAGATRE…RLWDEIEKML (206 aa)) form a phosphopantothenate--cysteine ligase region. Residues Asp287, Lys297, and Phe330 each contribute to the CTP site.

The protein in the N-terminal section; belongs to the HFCD (homo-oligomeric flavin containing Cys decarboxylase) superfamily. This sequence in the C-terminal section; belongs to the PPC synthetase family. Mg(2+) is required as a cofactor. Requires FMN as cofactor.

It catalyses the reaction N-[(R)-4-phosphopantothenoyl]-L-cysteine + H(+) = (R)-4'-phosphopantetheine + CO2. The enzyme catalyses (R)-4'-phosphopantothenate + L-cysteine + CTP = N-[(R)-4-phosphopantothenoyl]-L-cysteine + CMP + diphosphate + H(+). The protein operates within cofactor biosynthesis; coenzyme A biosynthesis. Its function is as follows. Catalyzes two sequential steps in the biosynthesis of coenzyme A. In the first step cysteine is conjugated to 4'-phosphopantothenate to form 4-phosphopantothenoylcysteine. In the second step the latter compound is decarboxylated to form 4'-phosphopantotheine. This is Coenzyme A biosynthesis bifunctional protein CoaBC from Thermococcus kodakarensis (strain ATCC BAA-918 / JCM 12380 / KOD1) (Pyrococcus kodakaraensis (strain KOD1)).